The chain runs to 75 residues: Defensin-like protein (75 aa).

The first 24 residues, 1 to 24, serve as a signal peptide directing secretion; the sequence is MEKKSIAGLCFLFLVLFVAQEVVV. Intrachain disulfides connect Cys-31-Cys-75, Cys-42-Cys-63, Cys-48-Cys-69, and Cys-52-Cys-71.

The protein belongs to the DEFL family.

The protein localises to the secreted. In terms of biological role, this protein is required for germination. This is Defensin-like protein from Vigna unguiculata (Cowpea).